A 289-amino-acid polypeptide reads, in one-letter code: uncharacterized protein (289 aa).

The HTH lysR-type domain maps to 1-58 (MDEKDWILLKILHEEQSVTKTAERLFTSQPSITYRLKKIEEIFGIELFTKRHKGITFT). A DNA-binding region (H-T-H motif) is located at residues 18-37 (VTKTAERLFTSQPSITYRLK).

It belongs to the LysR transcriptional regulatory family.

This is an uncharacterized protein from Bacillus subtilis (strain 168).